The sequence spans 370 residues: Uroporphyrinogen decarboxylase (370 aa).

Substrate contacts are provided by residues 29–33 (RQAGR), aspartate 79, tyrosine 155, serine 210, and histidine 342.

Belongs to the uroporphyrinogen decarboxylase family. In terms of assembly, homodimer.

The protein localises to the cytoplasm. The enzyme catalyses uroporphyrinogen III + 4 H(+) = coproporphyrinogen III + 4 CO2. It participates in porphyrin-containing compound metabolism; protoporphyrin-IX biosynthesis; coproporphyrinogen-III from 5-aminolevulinate: step 4/4. Catalyzes the decarboxylation of four acetate groups of uroporphyrinogen-III to yield coproporphyrinogen-III. This Acidovorax ebreus (strain TPSY) (Diaphorobacter sp. (strain TPSY)) protein is Uroporphyrinogen decarboxylase.